Here is a 386-residue protein sequence, read N- to C-terminus: MYSVLKQSIRPRLLATHNQFRTMITAQAVLYTQHGEPKDVLFTQSFEIDDDNLAPNEVIVKTLGSPINPSDINQIQGVYPSKPAKTTGFGTAEPAAPCGNEGLFEVIKVGSNVSSLEAGDWVIPSHVNFGTWRTHALGNDDDFIKLPNPAQSKANGKPNGLTINQGATISVNPLTAYLMLTHYVKLTPGKDWFIQNGGTSAVGKYASQIGKLLNFNSISVIRDRPNLDEVVASLKELGATQVITEDQNNSKEFGPTIKEWIKQSGGEAKLALNCVGGKSSTGIARKLNNNGLMLTYGGMSFQPVTIPTSLYIFKNFTSAGFWVTELLKNNKELKTSTLNQIIAWYEEGKLTDAKSIETLYDGTKPLHELYQDGVANSKDGKQLITY.

The transit peptide at 1 to 22 (MYSVLKQSIRPRLLATHNQFRT) directs the protein to the mitochondrion. Tyr79 functions as the Proton donor in the catalytic mechanism. NADP(+) is bound by residues Asn172, 199–202 (TSAV), 222–224 (RDR), 296–299 (YGGM), 321–323 (FWV), and Lys381.

Belongs to the zinc-containing alcohol dehydrogenase family. Quinone oxidoreductase subfamily. As to quaternary structure, homodimer and heterodimer with ETR1.

The protein localises to the mitochondrion. The catalysed reaction is a 2,3-saturated acyl-[ACP] + NADP(+) = a (2E)-enoyl-[ACP] + NADPH + H(+). In terms of biological role, required for respiration and the maintenance of the mitochondrial compartment. Oxidoreductase with a preference for short and medium chain substrates, including trans-2-hexenoyl-CoA (C6), trans-2-decenoyl-CoA (C10), and trans-2-hexadecenoyl-CoA (C16). May play a role in mitochondrial fatty acid synthesis. This is Enoyl-[acyl-carrier-protein] reductase 2, mitochondrial (ETR2) from Candida tropicalis (Yeast).